A 349-amino-acid chain; its full sequence is Leucine-rich repeat-containing protein 58 (349 aa).

10 LRR repeats span residues 14–34 (NLTH…NKRK), 35–56 (DVQQ…VNSF), 58–80 (HLHL…LGLT), 81–102 (KLKT…KELG), 105–125 (RLEV…QFLQ), 128–149 (TLKS…IENL), 151–173 (SLEF…ANLP), 174–195 (YLSY…LAQV), 197–217 (SLRS…ILSL), and 219–239 (QLQE…RDLT).

This chain is Leucine-rich repeat-containing protein 58 (lrrc58), found in Xenopus tropicalis (Western clawed frog).